The chain runs to 342 residues: Dihydroorotase (342 aa).

The Zn(2+) site is built by His13 and His15. Residues 15-17 (HLR) and Asn41 each bind substrate. Positions 98, 135, and 173 each coordinate Zn(2+). Lys98 bears the N6-carboxylysine mark. Position 135 (His135) interacts with substrate. Leu218 provides a ligand contact to substrate. Asp246 lines the Zn(2+) pocket. The active site involves Asp246. 2 residues coordinate substrate: His250 and Ala262.

The protein belongs to the metallo-dependent hydrolases superfamily. DHOase family. Class II DHOase subfamily. In terms of assembly, homodimer. Requires Zn(2+) as cofactor.

The catalysed reaction is (S)-dihydroorotate + H2O = N-carbamoyl-L-aspartate + H(+). The protein operates within pyrimidine metabolism; UMP biosynthesis via de novo pathway; (S)-dihydroorotate from bicarbonate: step 3/3. Catalyzes the reversible cyclization of carbamoyl aspartate to dihydroorotate. This chain is Dihydroorotase, found in Photobacterium profundum (strain SS9).